A 533-amino-acid polypeptide reads, in one-letter code: D-3-phosphoglycerate dehydrogenase (533 aa).

N-acetylalanine is present on Ala-2. A Phosphoserine modification is found at Ser-14. Position 21 is an N6-acetyllysine; alternate (Lys-21). Lys-21 participates in a covalent cross-link: Glycyl lysine isopeptide (Lys-Gly) (interchain with G-Cter in SUMO1); alternate. Lys-21 participates in a covalent cross-link: Glycyl lysine isopeptide (Lys-Gly) (interchain with G-Cter in SUMO2); alternate. At Lys-58 the chain carries N6-acetyllysine. Residues Thr-78, 155–156, Asp-175, Thr-207, 234–236, and Asp-260 contribute to the NAD(+) site; these read RI and CAR. Phosphothreonine is present on Thr-78. Residue Arg-236 is part of the active site. Residue Glu-265 is part of the active site. The active-site Proton donor is the His-283. Position 283–286 (283–286) interacts with NAD(+); it reads HLGA.

Belongs to the D-isomer specific 2-hydroxyacid dehydrogenase family. Homotetramer.

The enzyme catalyses (2R)-3-phosphoglycerate + NAD(+) = 3-phosphooxypyruvate + NADH + H(+). It catalyses the reaction (R)-2-hydroxyglutarate + NAD(+) = 2-oxoglutarate + NADH + H(+). It carries out the reaction (S)-malate + NAD(+) = oxaloacetate + NADH + H(+). It functions in the pathway amino-acid biosynthesis; L-serine biosynthesis; L-serine from 3-phospho-D-glycerate: step 1/3. In terms of biological role, catalyzes the reversible oxidation of 3-phospho-D-glycerate to 3-phosphonooxypyruvate, the first step of the phosphorylated L-serine biosynthesis pathway. Also catalyzes the reversible oxidation of 2-hydroxyglutarate to 2-oxoglutarate and the reversible oxidation of (S)-malate to oxaloacetate. This Pan troglodytes (Chimpanzee) protein is D-3-phosphoglycerate dehydrogenase (PHGDH).